A 207-amino-acid chain; its full sequence is Outer-membrane lipoprotein LolB (207 aa).

An N-terminal signal peptide occupies residues 1–21; that stretch reads MPLPDFRLIRLLPLAALVLTA. Cysteine 22 carries the N-palmitoyl cysteine lipid modification. Cysteine 22 carries the S-diacylglycerol cysteine lipid modification.

It belongs to the LolB family. Monomer.

The protein resides in the cell outer membrane. In terms of biological role, plays a critical role in the incorporation of lipoproteins in the outer membrane after they are released by the LolA protein. The sequence is that of Outer-membrane lipoprotein LolB from Shigella dysenteriae serotype 1 (strain Sd197).